The chain runs to 120 residues: uncharacterized protein (120 aa).

The 92-residue stretch at Gln29–Pro120 folds into the Nudix hydrolase domain. The Nudix box signature appears at Gly67–Ala89. Mg(2+)-binding residues include Glu83 and Glu87.

Belongs to the Nudix hydrolase family. PCD1 subfamily. It depends on Mn(2+) as a cofactor. Mg(2+) is required as a cofactor.

Its function is as follows. Probably mediates the hydrolysis of some nucleoside diphosphate derivatives. This is an uncharacterized protein from Klebsiella aerogenes (Enterobacter aerogenes).